The sequence spans 387 residues: Phosphoglycerate kinase (387 aa).

Substrate is bound by residues 21-23 (DLN), Arg-36, 59-62 (HLGR), Arg-113, and Arg-146. ATP is bound by residues Lys-197, Glu-314, and 340–343 (GGDT).

The protein belongs to the phosphoglycerate kinase family. In terms of assembly, monomer.

It is found in the cytoplasm. The catalysed reaction is (2R)-3-phosphoglycerate + ATP = (2R)-3-phospho-glyceroyl phosphate + ADP. Its pathway is carbohydrate degradation; glycolysis; pyruvate from D-glyceraldehyde 3-phosphate: step 2/5. The protein is Phosphoglycerate kinase of Sodalis glossinidius (strain morsitans).